Here is a 914-residue protein sequence, read N- to C-terminus: Alanine--tRNA ligase (914 aa).

His-608, His-612, Cys-711, and His-715 together coordinate Zn(2+).

It belongs to the class-II aminoacyl-tRNA synthetase family. It depends on Zn(2+) as a cofactor.

It is found in the cytoplasm. It catalyses the reaction tRNA(Ala) + L-alanine + ATP = L-alanyl-tRNA(Ala) + AMP + diphosphate. Functionally, catalyzes the attachment of alanine to tRNA(Ala) in a two-step reaction: alanine is first activated by ATP to form Ala-AMP and then transferred to the acceptor end of tRNA(Ala). Also edits incorrectly charged Ser-tRNA(Ala) and Gly-tRNA(Ala) via its editing domain. The protein is Alanine--tRNA ligase of Methanoregula boonei (strain DSM 21154 / JCM 14090 / 6A8).